A 147-amino-acid chain; its full sequence is Ribonuclease 4 (147 aa).

The first 28 residues, 1-28 (MALQRTHSLLLLLLLTLLGLGLVQPSYG), serve as a signal peptide directing secretion. Position 29 is a pyrrolidone carboxylic acid (glutamine 29). DUMP contacts are provided by arginine 35, histidine 40, lysine 68, asparagine 71, and threonine 72. The active-site Proton acceptor is histidine 40. 4 cysteine pairs are disulfide-bonded: cysteine 53–cysteine 109, cysteine 67–cysteine 120, cysteine 85–cysteine 135, and cysteine 92–cysteine 99. Histidine 144 functions as the Proton donor in the catalytic mechanism. DUMP is bound at residue phenylalanine 145.

It belongs to the pancreatic ribonuclease family.

It localises to the secreted. Its function is as follows. Cleaves preferentially after uridine bases. Has antimicrobial activity against uropathogenic E.coli (UPEC). Probably contributes to urinary tract sterility. The polypeptide is Ribonuclease 4 (RNASE4) (Pongo abelii (Sumatran orangutan)).